The primary structure comprises 625 residues: Branchpoint-bridging protein (625 aa).

Residues 1 to 16 (MSWRSNAQRTGMNAQP) show a composition bias toward polar residues. Disordered regions lie at residues 1–154 (MSWR…AIGA) and 177–206 (LRSGDFVPPDRERSPSPPPTYDNQGRRTNT). The span at 22–31 (RWGGAGGAGE) shows a compositional bias: gly residues. 3 stretches are compositionally biased toward low complexity: residues 32–61 (GPSSSGSPPSSYHQPSHPYQSSYSHQSQPY), 70–91 (SSSSSSSNPRDAALAAAAAVAA), and 110–130 (SYAAPSLLTSASTADGSGADA). The segment covering 177–190 (LRSGDFVPPDRERS) has biased composition (basic and acidic residues). The KH domain maps to 253–330 (YLPIKEFPEI…ASVKKCIKLI (78 aa)). CCHC-type zinc fingers lie at residues 368-385 (QLCKNCGNKGHRAFECPE) and 393-410 (IICHRCGGQGHLARDCTQ). The disordered stretch occupies residues 466-533 (GPDGKKIPPW…HAYHQQQQAY (68 aa)). Residues 488-503 (APRGGDAGRGGWGHRG) show a composition bias toward gly residues. Residues 516-533 (QHQQQQHPHAYHQQQQAY) are compositionally biased toward low complexity.

Belongs to the BBP/SF1 family.

It is found in the nucleus. Necessary for the splicing of pre-mRNA. Has a role in the recognition of the branch site (5'-UACUAAC-3'), the pyrimidine tract and the 3'-splice site at the 3'-end of introns. The polypeptide is Branchpoint-bridging protein (BBP) (Mycosarcoma maydis (Corn smut fungus)).